The primary structure comprises 693 residues: G1/S-specific cyclin CCN1 (693 aa).

The span at 273 to 298 (QKKQKKALSSNSSRTTTASYTHQNQS) shows a compositional bias: polar residues. Disordered regions lie at residues 273–320 (QKKQ…EDDD), 465–571 (DEDE…PPGS), 595–615 (SNSS…EKRY), and 662–693 (NNTN…QYHQ). 2 stretches are compositionally biased toward acidic residues: residues 306–320 (DEDI…EDDD) and 465–476 (DEDENVSTDDEA). 2 stretches are compositionally biased toward polar residues: residues 489–516 (DGNN…NHPQ) and 524–563 (PSAT…SSFA). Residues 666-685 (SSSPLMNQQQQQQVTQSSLY) show a composition bias toward low complexity.

This sequence belongs to the cyclin family. As to quaternary structure, interacts with CDC28. The CDC28-CCN1 complex associates with septin CDC11 upon hyphal induction.

G1/S-specific cyclin essential for the control of the cell cycle at the G1/S (start) transition and for maintenance of filamentous growth. Through binding to CDC28 controls the phosphorylation of CDC11 and SEC2 upon induction of filamentous growth. This Candida albicans (strain SC5314 / ATCC MYA-2876) (Yeast) protein is G1/S-specific cyclin CCN1 (CCN1).